A 117-amino-acid polypeptide reads, in one-letter code: Large ribosomal subunit protein bL20 (117 aa).

The protein belongs to the bacterial ribosomal protein bL20 family.

Functionally, binds directly to 23S ribosomal RNA and is necessary for the in vitro assembly process of the 50S ribosomal subunit. It is not involved in the protein synthesizing functions of that subunit. The protein is Large ribosomal subunit protein bL20 of Limosilactobacillus fermentum (strain NBRC 3956 / LMG 18251) (Lactobacillus fermentum).